The following is a 173-amino-acid chain: MSSFTHFNEQGRAKMVDITEKEDTIRVAVAQTSVTVNKEIYEKMTNRMIEKGDVLAVAQVAGIMAAKKTSDLIPMCHPLMLKGVDIQFAWHVEEEKALYQLLITVTVKTKGSTGVEMEALTAASVCALTVYDMCKALDKGMVIGPTYLVEKSGGKSGHYQRENSSVGGFANEQ.

Substrate contacts are provided by residues 75-77 (MCH) and 117-118 (ME). D132 is an active-site residue. The tract at residues 152-173 (SGGKSGHYQRENSSVGGFANEQ) is disordered. The span at 162 to 173 (ENSSVGGFANEQ) shows a compositional bias: polar residues.

Belongs to the MoaC family. In terms of assembly, homohexamer; trimer of dimers.

The enzyme catalyses (8S)-3',8-cyclo-7,8-dihydroguanosine 5'-triphosphate = cyclic pyranopterin phosphate + diphosphate. It participates in cofactor biosynthesis; molybdopterin biosynthesis. Functionally, catalyzes the conversion of (8S)-3',8-cyclo-7,8-dihydroguanosine 5'-triphosphate to cyclic pyranopterin monophosphate (cPMP). The polypeptide is Cyclic pyranopterin monophosphate synthase (Geobacillus sp. (strain WCH70)).